The following is a 773-amino-acid chain: Carnitine O-palmitoyltransferase 1, liver isoform (773 aa).

Ala2 is modified (N-acetylalanine). Residues 2-47 lie on the Cytoplasmic side of the membrane; that stretch reads AEAHQAVAFQFTVTPDGIDLRLSHEALRQIYLSGLHSWKKKFIRFK. A helical membrane pass occupies residues 48 to 73; it reads NGIITGVYPASPSSWLIVVVGVMTTM. The Mitochondrial intermembrane portion of the chain corresponds to 74–102; it reads YAKIDPSLGIIAKINRTLETANCMSSQTK. A helical membrane pass occupies residues 103-122; it reads NVVSGVLFGTGLWVALIVTM. The Cytoplasmic segment spans residues 123-773; sequence RYSLKVLLSY…LFGLSSNSKK (651 aa). A 3'-nitrotyrosine modification is found at Tyr282. The Proton acceptor role is filled by His473. 555 to 567 provides a ligand contact to CoA; that stretch reads GKGIIKKCRTSPD. Thr588 is subject to Phosphothreonine. 3'-nitrotyrosine is present on Tyr589. (R)-carnitine-binding residues include Tyr589 and Thr602. Phosphothreonine is present on Thr604. Phosphoserine occurs at positions 741 and 747.

Belongs to the carnitine/choline acetyltransferase family. As to quaternary structure, homohexamer and homotrimer. Identified in a complex that contains at least CPT1A, ACSL1 and VDAC1. Also identified in complexes with ACSL1 and VDAC2 and VDAC3. Interacts with ZDHHC4. Strong expression in kidney and heart, and lower in liver and skeletal muscle.

The protein resides in the mitochondrion outer membrane. The enzyme catalyses (R)-carnitine + hexadecanoyl-CoA = O-hexadecanoyl-(R)-carnitine + CoA. It carries out the reaction succinyl-CoA + L-lysyl-[protein] = N(6)-succinyl-L-lysyl-[protein] + CoA + H(+). It functions in the pathway lipid metabolism; fatty acid beta-oxidation. Inhibited by malonyl-CoA. In terms of biological role, catalyzes the transfer of the acyl group of long-chain fatty acid-CoA conjugates onto carnitine, an essential step for the mitochondrial uptake of long-chain fatty acids and their subsequent beta-oxidation in the mitochondrion. Also possesses a lysine succinyltransferase activity that can regulate enzymatic activity of substrate proteins such as ENO1 and metabolism independent of its classical carnitine O-palmitoyltransferase activity. Plays an important role in hepatic triglyceride metabolism. Also plays a role in inducible regulatory T-cell (iTreg) differentiation once activated by butyryl-CoA that antagonizes malonyl-CoA-mediated CPT1A repression. Sustains the IFN-I response by recruiting ZDHCC4 to palmitoylate MAVS at the mitochondria leading to MAVS stabilization and activation. Promotes ROS-induced oxidative stress in liver injury via modulation of NFE2L2 and NLRP3-mediated signaling pathways. This Homo sapiens (Human) protein is Carnitine O-palmitoyltransferase 1, liver isoform.